The primary structure comprises 395 residues: Phosphoglycerate kinase (395 aa).

Residues 22–24 (DLN), Arg-37, 60–63 (HFGR), Arg-116, and Arg-149 contribute to the substrate site. ATP-binding positions include Lys-199, Glu-322, and 352–355 (GGDT).

The protein belongs to the phosphoglycerate kinase family. In terms of assembly, monomer.

Its subcellular location is the cytoplasm. The catalysed reaction is (2R)-3-phosphoglycerate + ATP = (2R)-3-phospho-glyceroyl phosphate + ADP. It functions in the pathway carbohydrate degradation; glycolysis; pyruvate from D-glyceraldehyde 3-phosphate: step 2/5. The chain is Phosphoglycerate kinase from Novosphingobium aromaticivorans (strain ATCC 700278 / DSM 12444 / CCUG 56034 / CIP 105152 / NBRC 16084 / F199).